We begin with the raw amino-acid sequence, 429 residues long: Glutamate-1-semialdehyde 2,1-aminomutase (429 aa).

N6-(pyridoxal phosphate)lysine is present on Lys-267.

It belongs to the class-III pyridoxal-phosphate-dependent aminotransferase family. HemL subfamily. In terms of assembly, homodimer. It depends on pyridoxal 5'-phosphate as a cofactor.

The protein resides in the cytoplasm. The enzyme catalyses (S)-4-amino-5-oxopentanoate = 5-aminolevulinate. It functions in the pathway porphyrin-containing compound metabolism; protoporphyrin-IX biosynthesis; 5-aminolevulinate from L-glutamyl-tRNA(Glu): step 2/2. This chain is Glutamate-1-semialdehyde 2,1-aminomutase, found in Xanthomonas oryzae pv. oryzae (strain MAFF 311018).